A 526-amino-acid chain; its full sequence is Outer capsid protein VP5 (526 aa).

An involved in membrane permeabilization region spans residues 1 to 42; it reads MGKVIRSLSRFGKKVGNALTSNTAKKIYSTIGKAAERFAESE.

Belongs to the orbivirus VP5 family.

It localises to the virion. Functionally, VP5 protein is one of the two proteins (with VP2) which constitute the virus particle outer capsid. Acts as a membrane permeabilization protein that mediates release of viral particles from endosomal compartments into the cytoplasm. Permeabilization activity is probably negatively regulated by VP2 and is triggered by endosomal degradation of VP2 and exposure to low pH. This chain is Outer capsid protein VP5 (Segment-6), found in Bluetongue virus 1 (isolate Australia) (BTV 1).